Consider the following 655-residue polypeptide: Very long-chain specific acyl-CoA dehydrogenase, mitochondrial (655 aa).

The transit peptide at 1–40 (MQAARIAPSLGRQLLRFGGGSSRPTALLGQPWPGPARRPY) directs the protein to the mitochondrion. The interval 41–482 (AGGAAQLALD…ALQGCMDKGK (442 aa)) is catalytic. Lys-51 carries the post-translational modification N6-acetyllysine. Lys-71 carries the N6-acetyllysine; alternate modification. Lys-71 is subject to N6-succinyllysine; alternate. An N6-succinyllysine modification is found at Lys-195. 214 to 223 (FCLTEPSSGS) lines the FAD pocket. Cys-237 is subject to S-nitrosocysteine. Lys-239 carries the N6-acetyllysine; alternate modification. Lys-239 is modified (N6-succinyllysine; alternate). 249–251 (WIS) is an FAD binding site. N6-acetyllysine; alternate occurs at positions 276 and 278. Lys-276 and Lys-278 each carry N6-succinyllysine; alternate. Lys-298 is subject to N6-acetyllysine. Residue Lys-331 is modified to N6-acetyllysine; alternate. N6-succinyllysine; alternate is present on Lys-331. Lys-372 carries the N6-succinyllysine modification. 461–463 (FEG) is a binding site for substrate. Glu-462 (proton acceptor) is an active-site residue. An FAD-binding site is contributed by 464–466 (TND). An N6-acetyllysine; alternate modification is found at Lys-482. Residue Lys-482 is modified to N6-succinyllysine; alternate. The membrane-anchoring stretch occupies residues 483-516 (ELSGLGSALKNPFGNAGLLLGEAGKQLRRRAGLG). 2 positions are modified to phosphoserine: Ser-517 and Ser-522. N6-acetyllysine is present on Lys-550. Lys-556 carries the post-translational modification N6-acetyllysine; alternate. Residue Lys-556 is modified to N6-succinyllysine; alternate. Gln-562 contributes to the FAD binding site. The residue at position 639 (Lys-639) is an N6-succinyllysine.

Belongs to the acyl-CoA dehydrogenase family. Homodimer. Homodimerizes after import into the mitochondrion. The cofactor is FAD. S-nitrosylation at Cys-237 in liver improves catalytic efficiency.

It localises to the mitochondrion inner membrane. The enzyme catalyses a very-long-chain 2,3-saturated fatty acyl-CoA + oxidized [electron-transfer flavoprotein] + H(+) = a very-long-chain (2E)-enoyl-CoA + reduced [electron-transfer flavoprotein]. The catalysed reaction is dodecanoyl-CoA + oxidized [electron-transfer flavoprotein] + H(+) = (2E)-dodecenoyl-CoA + reduced [electron-transfer flavoprotein]. It catalyses the reaction tetradecanoyl-CoA + oxidized [electron-transfer flavoprotein] + H(+) = (2E)-tetradecenoyl-CoA + reduced [electron-transfer flavoprotein]. It carries out the reaction oxidized [electron-transfer flavoprotein] + hexadecanoyl-CoA + H(+) = (2E)-hexadecenoyl-CoA + reduced [electron-transfer flavoprotein]. The enzyme catalyses octadecanoyl-CoA + oxidized [electron-transfer flavoprotein] + H(+) = (2E)-octadecenoyl-CoA + reduced [electron-transfer flavoprotein]. The catalysed reaction is eicosanoyl-CoA + oxidized [electron-transfer flavoprotein] + H(+) = (2E)-eicosenoyl-CoA + reduced [electron-transfer flavoprotein]. It catalyses the reaction docosanoyl-CoA + oxidized [electron-transfer flavoprotein] + H(+) = (2E)-docosenoyl-CoA + reduced [electron-transfer flavoprotein]. It carries out the reaction tetracosanoyl-CoA + oxidized [electron-transfer flavoprotein] + H(+) = (2E)-tetracosenoyl-CoA + reduced [electron-transfer flavoprotein]. The protein operates within lipid metabolism; mitochondrial fatty acid beta-oxidation. Functionally, very long-chain specific acyl-CoA dehydrogenase is one of the acyl-CoA dehydrogenases that catalyze the first step of mitochondrial fatty acid beta-oxidation, an aerobic process breaking down fatty acids into acetyl-CoA and allowing the production of energy from fats. The first step of fatty acid beta-oxidation consists in the removal of one hydrogen from C-2 and C-3 of the straight-chain fatty acyl-CoA thioester, resulting in the formation of trans-2-enoyl-CoA. Among the different mitochondrial acyl-CoA dehydrogenases, very long-chain specific acyl-CoA dehydrogenase acts specifically on acyl-CoAs with saturated 12 to 24 carbons long primary chains. This chain is Very long-chain specific acyl-CoA dehydrogenase, mitochondrial, found in Macaca fascicularis (Crab-eating macaque).